The sequence spans 309 residues: ATP synthase gamma chain (309 aa).

Belongs to the ATPase gamma chain family. F-type ATPases have 2 components, CF(1) - the catalytic core - and CF(0) - the membrane proton channel. CF(1) has five subunits: alpha(3), beta(3), gamma(1), delta(1), epsilon(1). CF(0) has three main subunits: a, b and c.

It localises to the cell membrane. Functionally, produces ATP from ADP in the presence of a proton gradient across the membrane. The gamma chain is believed to be important in regulating ATPase activity and the flow of protons through the CF(0) complex. This Ligilactobacillus salivarius (strain UCC118) (Lactobacillus salivarius) protein is ATP synthase gamma chain.